A 95-amino-acid chain; its full sequence is Small ribosomal subunit protein mS37 (95 aa).

One can recognise a CHCH domain in the interval 27–69; the sequence is ANRCLVLMSNLLQCWSSNGHMNPVCEKLATDLKACTSQNVMGS. 2 short sequence motifs (cx9C motif) span residues 30–40 and 51–61; these read CLVLMSNLLQC and CEKLATDLKAC. Disulfide bonds link Cys30/Cys61 and Cys40/Cys51.

It belongs to the mitochondrion-specific ribosomal protein mS37 family. In terms of assembly, component of the mitochondrial small ribosomal subunit.

Its subcellular location is the mitochondrion. Its function is as follows. Involved in mitochondrial genome encoded proteins translation. This Eremothecium gossypii (strain ATCC 10895 / CBS 109.51 / FGSC 9923 / NRRL Y-1056) (Yeast) protein is Small ribosomal subunit protein mS37 (MRP10).